Consider the following 859-residue polypeptide: Leucine--tRNA ligase (859 aa).

The 'HIGH' region signature appears at 42–52; it reads PYPSGRLHMGH. Positions 618–622 match the 'KMSKS' region motif; it reads KMSKS. Lys-621 contributes to the ATP binding site.

The protein belongs to the class-I aminoacyl-tRNA synthetase family.

It is found in the cytoplasm. The enzyme catalyses tRNA(Leu) + L-leucine + ATP = L-leucyl-tRNA(Leu) + AMP + diphosphate. This is Leucine--tRNA ligase from Shewanella baltica (strain OS155 / ATCC BAA-1091).